Reading from the N-terminus, the 200-residue chain is GTP-binding protein ypt2 (200 aa).

Position 16–23 (Gly16–Ser23) interacts with GTP. Residues Phe38 to Phe46 carry the Effector region motif. GTP-binding positions include Asp64–Gln68 and Asn122–Asp125. Residues Cys199 and Cys200 are each lipidated (S-geranylgeranyl cysteine).

Belongs to the small GTPase superfamily. Rab family.

It is found in the cell membrane. Its function is as follows. Protein transport. Probably involved in vesicular traffic. In Schizosaccharomyces pombe (strain 972 / ATCC 24843) (Fission yeast), this protein is GTP-binding protein ypt2 (ypt2).